Consider the following 1217-residue polypeptide: DNA-directed RNA polymerase subunit beta' (1217 aa).

Zn(2+) contacts are provided by Cys60, Cys62, Cys75, and Cys78. Residues Asp449, Asp451, and Asp453 each contribute to the Mg(2+) site. Zn(2+) contacts are provided by Cys821, Cys895, Cys902, and Cys905.

This sequence belongs to the RNA polymerase beta' chain family. In terms of assembly, the RNAP catalytic core consists of 2 alpha, 1 beta, 1 beta' and 1 omega subunit. When a sigma factor is associated with the core the holoenzyme is formed, which can initiate transcription. The cofactor is Mg(2+). It depends on Zn(2+) as a cofactor.

It catalyses the reaction RNA(n) + a ribonucleoside 5'-triphosphate = RNA(n+1) + diphosphate. DNA-dependent RNA polymerase catalyzes the transcription of DNA into RNA using the four ribonucleoside triphosphates as substrates. In Lactobacillus acidophilus (strain ATCC 700396 / NCK56 / N2 / NCFM), this protein is DNA-directed RNA polymerase subunit beta'.